Here is a 160-residue protein sequence, read N- to C-terminus: Cytochrome b6-f complex subunit 4 (160 aa).

3 consecutive transmembrane segments (helical) span residues 36 to 56 (LLYIFPVVIFGTFACCIGLAV), 95 to 115 (LLGVLAMAAVPVGLLTVPFIE), and 131 to 151 (ILFLVGTLVAVWLGIGATFPI).

Belongs to the cytochrome b family. PetD subfamily. In terms of assembly, the 4 large subunits of the cytochrome b6-f complex are cytochrome b6, subunit IV (17 kDa polypeptide, petD), cytochrome f and the Rieske protein, while the 4 small subunits are petG, petL, petM and petN. The complex functions as a dimer.

It localises to the plastid. Its subcellular location is the chloroplast thylakoid membrane. Its function is as follows. Component of the cytochrome b6-f complex, which mediates electron transfer between photosystem II (PSII) and photosystem I (PSI), cyclic electron flow around PSI, and state transitions. This is Cytochrome b6-f complex subunit 4 from Chlamydomonas moewusii (Chlamydomonas eugametos).